Consider the following 170-residue polypeptide: Probable inosine/xanthosine triphosphatase (170 aa).

7–12 serves as a coordination point for substrate; that stretch reads TTNPVK. Asp37 is a binding site for Mg(2+).

This sequence belongs to the YjjX NTPase family. In terms of assembly, homodimer. Requires Mg(2+) as cofactor. Mn(2+) serves as cofactor.

The catalysed reaction is XTP + H2O = XDP + phosphate + H(+). The enzyme catalyses ITP + H2O = IDP + phosphate + H(+). Phosphatase that hydrolyzes non-canonical purine nucleotides such as XTP and ITP to their respective diphosphate derivatives. Probably excludes non-canonical purines from DNA/RNA precursor pool, thus preventing their incorporation into DNA/RNA and avoiding chromosomal lesions. This Methanopyrus kandleri (strain AV19 / DSM 6324 / JCM 9639 / NBRC 100938) protein is Probable inosine/xanthosine triphosphatase.